Consider the following 84-residue polypeptide: U4-theraphotoxin-Hhn1a (84 aa).

The signal sequence occupies residues M1–A22. Residues E23–R47 constitute a propeptide that is removed on maturation. Cystine bridges form between C51-C65, C55-C76, and C70-C81.

This sequence belongs to the neurotoxin 12 (Hwtx-2) family. 02 (Hwtx-2) subfamily. As to expression, expressed by the venom gland.

It localises to the secreted. Postsynaptic neurotoxin. The sequence is that of U4-theraphotoxin-Hhn1a from Cyriopagopus hainanus (Chinese bird spider).